The chain runs to 114 residues: Thioredoxin H1 (114 aa).

At Ala2 the chain carries N-acetylalanine. The 113-residue stretch at 2 to 114 folds into the Thioredoxin domain; sequence ASEEGQVIAC…LQSTIAKHLA (113 aa). Active-site nucleophile residues include Cys40 and Cys43. Cys40 and Cys43 are joined by a disulfide.

This sequence belongs to the thioredoxin family. Plant H-type subfamily. Interacts with FBA6. Interacts with MDH1.

Its subcellular location is the cytoplasm. Functionally, thiol-disulfide oxidoreductase involved in the redox regulation of a number of cytosolic enzymes. Activates the cytosolic malate dehydrogenase (MDH) probably by reducing an interchain disulfide bond of the inactive MDH homodimer. Possesses insulin disulfide bonds reducing activity. The chain is Thioredoxin H1 (TRX1) from Arabidopsis thaliana (Mouse-ear cress).